The sequence spans 814 residues: Putative serine/threonine-protein kinase-like protein CCR3 (814 aa).

The signal sequence occupies residues 1 to 30 (MKRFINSTVTFSVTVTIAVIIFFLLSPVTS). Residues Asn-6, Asn-68, Asn-136, Asn-215, Asn-226, Asn-251, Asn-260, Asn-275, Asn-299, and Asn-309 are each glycosylated (N-linked (GlcNAc...) asparagine). Residues 31 to 393 (LGSGSTYAVV…SSPPSKALTR (363 aa)) lie on the Extracellular side of the membrane. Positions 366-381 (SQFPLPPPPPPPPPSP) are enriched in pro residues. Residues 366–388 (SQFPLPPPPPPPPPSPSTSSPPS) are disordered. The helical transmembrane segment at 394 to 414 (GLLAFAIVGSVGAFAGICSVV) threads the bilayer. Residues 415–814 (YCLWTGVCLG…SSGICSIVSD (400 aa)) lie on the Cytoplasmic side of the membrane. The segment at 433 to 478 (QPTITRGGSNSRSNSSNSRSLSIRRQGSRMLSMRRQRSGTSSMKHA) is disordered. A compositionally biased stretch (low complexity) spans 441 to 457 (SNSRSNSSNSRSLSIRR). The Protein kinase domain maps to 496–794 (FSLENKIGSG…DIVGNLERAL (299 aa)). Residues 502 to 510 (IGSGSFGVV) and Lys-524 each bind ATP. Asp-631 serves as the catalytic Proton acceptor.

It belongs to the protein kinase superfamily. Ser/Thr protein kinase family. As to quaternary structure, homodimer. As to expression, expressed in roots, leaves, shoot apical meristems (SAM), and floral buds.

It is found in the membrane. It carries out the reaction L-seryl-[protein] + ATP = O-phospho-L-seryl-[protein] + ADP + H(+). The catalysed reaction is L-threonyl-[protein] + ATP = O-phospho-L-threonyl-[protein] + ADP + H(+). Functionally, serine/threonine-protein kinase. The sequence is that of Putative serine/threonine-protein kinase-like protein CCR3 (CCR3) from Arabidopsis thaliana (Mouse-ear cress).